The primary structure comprises 680 residues: Outer dense fiber protein 2 (680 aa).

The segment at 27-46 is disordered; that stretch reads LPKPSATSSQKSHKRGMKGD. A phosphoserine mark is found at Ser68 and Ser69. The residue at position 87 (Thr87) is a Phosphothreonine. The residue at position 90 (Ser90) is a Phosphoserine; by TSSK4. Residues Ser101 and Ser104 each carry the phosphoserine modification. Residue Thr105 is modified to Phosphothreonine. 2 positions are modified to phosphoserine: Ser110 and Ser124. Lys133 participates in a covalent cross-link: Glycyl lysine isopeptide (Lys-Gly) (interchain with G-Cter in SUMO2). Ser134 is modified (phosphoserine). Residues 139–212 adopt a coiled-coil conformation; sequence QKGERQMAKR…MSKLVEAEMD (74 aa). A Phosphothreonine modification is found at Thr226. Residue Ser256 is modified to Phosphoserine. Coiled-coil stretches lie at residues 275–418 and 456–630; these read KEDS…AEQL and EIIV…SDLR. Positions 387–410 are disordered; it reads KQKGDRDKESLKKAIRAQKERAEK. At Ser627 the chain carries Phosphoserine. A disordered region spans residues 632–680; the sequence is RETGGDQCPEYRVPTGDCQEGGGNPPVPAAARGENTGMWDPGKAVGERH.

The protein belongs to the ODF2 family. As to quaternary structure, self-associates. Associates with microtubules and forms a fibrillar structure partially linked to the microtubule network. Interacts via its C-terminus with PLK1. Interacts with ODF1. Interacts with MARK4; the interaction is required for localization of ODF2 to centrioles. Interacts with TSSK4. Interacts with AKNA. Interacts with QRICH2. Interacts with CFAP58. Interacts with BBOF1. Interacts with CCDC38. Interacts with CCDC42. Post-translationally, tyrosine phosphorylated. Phosphorylated on Ser-90 by TSSK4.

It is found in the cytoplasm. The protein localises to the cytoskeleton. It localises to the microtubule organizing center. The protein resides in the centrosome. Its subcellular location is the cell projection. It is found in the cilium. The protein localises to the centriole. It localises to the spindle pole. The protein resides in the flagellum. In terms of biological role, seems to be a major component of sperm tail outer dense fibers (ODF). ODFs are filamentous structures located on the outside of the axoneme in the midpiece and principal piece of the mammalian sperm tail and may help to maintain the passive elastic structures and elastic recoil of the sperm tail. May have a modulating influence on sperm motility. Functions as a general scaffold protein that is specifically localized at the distal/subdistal appendages of mother centrioles. Component of the centrosome matrix required for the localization of PLK1 and NIN to the centrosomes. Required for the formation and/or maintenance of normal CETN1 assembly. In Pongo abelii (Sumatran orangutan), this protein is Outer dense fiber protein 2 (ODF2).